Here is a 326-residue protein sequence, read N- to C-terminus: Flap endonuclease 1 (326 aa).

The N-domain stretch occupies residues 1–100 (MGNAALRQLA…EEVQERRVAR (100 aa)). Residues Asp28, Asp82, Glu154, Glu156, Asp175, Asp177, and Asp225 each contribute to the Mg(2+) site. An I-domain region spans residues 118 to 246 (AASRLEARTQ…TAISAINDHG (129 aa)). The segment at 318 to 326 (VQTGLDEWI) is interaction with PCNA.

This sequence belongs to the XPG/RAD2 endonuclease family. FEN1 subfamily. As to quaternary structure, interacts with PCNA. PCNA stimulates the nuclease activity without altering cleavage specificity. It depends on Mg(2+) as a cofactor.

Its function is as follows. Structure-specific nuclease with 5'-flap endonuclease and 5'-3' exonuclease activities involved in DNA replication and repair. During DNA replication, cleaves the 5'-overhanging flap structure that is generated by displacement synthesis when DNA polymerase encounters the 5'-end of a downstream Okazaki fragment. Binds the unpaired 3'-DNA end and kinks the DNA to facilitate 5' cleavage specificity. Cleaves one nucleotide into the double-stranded DNA from the junction in flap DNA, leaving a nick for ligation. Also involved in the base excision repair (BER) pathway. Acts as a genome stabilization factor that prevents flaps from equilibrating into structures that lead to duplications and deletions. Also possesses 5'-3' exonuclease activity on nicked or gapped double-stranded DNA. The protein is Flap endonuclease 1 of Haloquadratum walsbyi (strain DSM 16790 / HBSQ001).